The chain runs to 247 residues: Triosephosphate isomerase (247 aa).

Position 9 to 11 (9 to 11 (NWK)) interacts with substrate. The active-site Electrophile is His93. Glu163 (proton acceptor) is an active-site residue. Residues Gly169, Ser209, and 230-231 (GG) each bind substrate.

The protein belongs to the triosephosphate isomerase family. In terms of assembly, homodimer.

The protein resides in the cytoplasm. It carries out the reaction D-glyceraldehyde 3-phosphate = dihydroxyacetone phosphate. The protein operates within carbohydrate biosynthesis; gluconeogenesis. It participates in carbohydrate degradation; glycolysis; D-glyceraldehyde 3-phosphate from glycerone phosphate: step 1/1. In terms of biological role, involved in the gluconeogenesis. Catalyzes stereospecifically the conversion of dihydroxyacetone phosphate (DHAP) to D-glyceraldehyde-3-phosphate (G3P). The polypeptide is Triosephosphate isomerase (Dinoroseobacter shibae (strain DSM 16493 / NCIMB 14021 / DFL 12)).